The sequence spans 167 residues: Disulfide bond formation protein B (167 aa).

At 1-12 (MFLNLLDAPRRL) the chain is on the cytoplasmic side. The chain crosses the membrane as a helical span at residues 13–29 (LALVALGCVALLAFGLY). Topologically, residues 30–47 (LQHVVGLEPCPMCIVQRY) are periplasmic. An intrachain disulfide couples C39 to C42. The chain crosses the membrane as a helical span at residues 48–63 (ALVLVAIVAGLTAITS). Residues 64-69 (NKKGLI) lie on the Cytoplasmic side of the membrane. A helical membrane pass occupies residues 70–87 (TGSGVLLLLAGFGAFVAA). Residues 88-143 (RQSFLQWYPPEVASCGRDFYGMIETFPLQRAIPMIFKGSGDCAKVDWTFLGGSIAN) are Periplasmic-facing. C102 and C129 are joined by a disulfide. The helical transmembrane segment at 144–162 (WSFVCFAVIGLTALTLIAR) threads the bilayer. Over 163 to 167 (LARQR) the chain is Cytoplasmic.

Belongs to the DsbB family.

Its subcellular location is the cell inner membrane. Required for disulfide bond formation in some periplasmic proteins. Acts by oxidizing the DsbA protein. In Polaromonas naphthalenivorans (strain CJ2), this protein is Disulfide bond formation protein B.